The chain runs to 389 residues: Serpin-Z3 (389 aa).

Residues 337–361 (GTEAAAVSVAIMMPQCLMRNPDFVA) are RCL.

This sequence belongs to the serpin family.

In terms of biological role, probable serine protease inhibitor. The protein is Serpin-Z3 of Arabidopsis thaliana (Mouse-ear cress).